The primary structure comprises 230 residues: Complex I assembly factor TMEM126B, mitochondrial (230 aa).

Residue Ser-34 is modified to Phosphoserine. Helical transmembrane passes span Ile-72–Leu-92, Leu-110–Leu-130, Val-141–Phe-161, and Ile-199–Phe-219.

Belongs to the TMEM126 family. As to quaternary structure, part of the mitochondrial complex I assembly/MCIA complex that comprises at least the core subunits TMEM126B, NDUFAF1, ECSIT and ACAD9 and complement subunits such as COA1 and TMEM186. Associates with the intermediate 370 kDa subcomplex of incompletely assembled complex I. Interacts with TMEM70.

The protein resides in the mitochondrion membrane. Functionally, as part of the MCIA complex, involved in the assembly of the mitochondrial complex I. Participates in constructing the membrane arm of complex I. This Homo sapiens (Human) protein is Complex I assembly factor TMEM126B, mitochondrial.